We begin with the raw amino-acid sequence, 211 residues long: Suppressor of cytokine signaling 1 (211 aa).

Residues M1–T53 are disordered. The segment covering P25–A35 has biased composition (low complexity). The segment covering P36–A49 has biased composition (pro residues). The tract at residues F55 to R66 is kinase inhibitory region (KIR). Residues I67–G78 form an extended SH2 subdomain (ESS) region. Residues F79–L174 form the SH2 domain. The 50-residue stretch at M161–Q210 folds into the SOCS box domain. The segment at P173–I182 is interaction with Elongin BC complex.

The protein belongs to the SOCS1 family. As to quaternary structure, interacts with multiple activated signaling proteins of the tyrosine kinase signaling pathway including JAK family kinases, TEC, KIT, GRB2 and VAV. Binding to JAKs is mediated through the KIR and SH2 domains to a phosphorylated tyrosine residue within the JAK JH1 domain. Binds the SH3 domain of GRB2 via diproline determinants in the N-terminus, and the N-terminal regulatory domain of VAV. Interacts with the Elongin BC complex (ELOB and ELOC). Component of an ECS CBC(SOCS1) E3 ubiquitin-protein ligase complex which contains Elongin BC, CUL5, RBX1 and SOCS1. Interacts (via SH2 domain and SOCS box) with TRIM8. Interacts with AXL, CUL2 and FGFR3. Interacts with INSR. Interacts with TRIM8. Interacts with DCUN1D1. Interacts with IFNGR1. In terms of tissue distribution, expressed in all tissues with high expression in spleen, small intestine and peripheral blood leukocytes.

It localises to the nucleus. It is found in the cytoplasmic vesicle. Its pathway is protein modification; protein ubiquitination. Essential negative regulator of type I and type II interferon (IFN) signaling, as well as that of other cytokines, including IL2, IL4, IL6 and leukemia inhibitory factor (LIF). Downregulates cytokine signaling by inhibiting the JAK/STAT signaling pathway. Acts by binding to JAK proteins and to IFNGR1 and inhibiting their kinase activity. In vitro, suppresses Tec protein-tyrosine activity. Regulates IFN-gamma (IFNG)-mediated sensory neuron survival. Probable substrate recognition component of an ECS (Elongin BC-CUL2/5-SOCS-box protein) E3 ubiquitin ligase complex which mediates the ubiquitination and subsequent proteasomal degradation of target proteins. This chain is Suppressor of cytokine signaling 1 (SOCS1), found in Homo sapiens (Human).